The chain runs to 278 residues: Large ribosomal subunit protein uL2c (278 aa).

Disordered regions lie at residues 32–56 and 203–256; these read SLTS…HRGG and QSIG…PTIG. Over residues 209-220 the composition is skewed to basic residues; that stretch reads GSKRWQGKRPKV.

Belongs to the universal ribosomal protein uL2 family. Part of the 50S ribosomal subunit.

The protein resides in the plastid. The protein localises to the chloroplast. This is Large ribosomal subunit protein uL2c (rpl2) from Chara vulgaris (Common stonewort).